A 319-amino-acid chain; its full sequence is Thiamine pyrophosphokinase (319 aa).

Position 2 is an N-acetylserine (Ser2).

It belongs to the thiamine pyrophosphokinase family. As to quaternary structure, homodimer.

It catalyses the reaction thiamine + ATP = thiamine diphosphate + AMP + H(+). It functions in the pathway cofactor biosynthesis; thiamine diphosphate biosynthesis; thiamine diphosphate from thiamine: step 1/1. In terms of biological role, essential protein, it is the only enzyme in yeast capable of synthesizing thiamine pyrophosphate (TPP). The polypeptide is Thiamine pyrophosphokinase (Saccharomyces cerevisiae (strain ATCC 204508 / S288c) (Baker's yeast)).